Consider the following 302-residue polypeptide: Elongation factor Ts (302 aa).

An involved in Mg(2+) ion dislocation from EF-Tu region spans residues 82–85; that stretch reads TDFV.

Belongs to the EF-Ts family.

The protein localises to the cytoplasm. Its function is as follows. Associates with the EF-Tu.GDP complex and induces the exchange of GDP to GTP. It remains bound to the aminoacyl-tRNA.EF-Tu.GTP complex up to the GTP hydrolysis stage on the ribosome. In Nitrosospira multiformis (strain ATCC 25196 / NCIMB 11849 / C 71), this protein is Elongation factor Ts.